The primary structure comprises 255 residues: 5-oxoprolinase subunit A 1 (255 aa).

This sequence belongs to the LamB/PxpA family. As to quaternary structure, forms a complex composed of PxpA, PxpB and PxpC.

The enzyme catalyses 5-oxo-L-proline + ATP + 2 H2O = L-glutamate + ADP + phosphate + H(+). Its function is as follows. Catalyzes the cleavage of 5-oxoproline to form L-glutamate coupled to the hydrolysis of ATP to ADP and inorganic phosphate. The protein is 5-oxoprolinase subunit A 1 of Agrobacterium fabrum (strain C58 / ATCC 33970) (Agrobacterium tumefaciens (strain C58)).